A 487-amino-acid polypeptide reads, in one-letter code: MKYHDLRDFMSQLEKTGELKRVGVEVDTYLEMTEICDRVLRAEGPAILFEKPKGHSIPVLANLFGTPKRVALGMGEESVQALREVGKLLAYLKEPEPPKGLKDAWDKLPILKQVLNMAPKKVSNAPCQEIVWEGKDVDLSRLPIQHCWPGDIAPLITWGLVVTKGPHKNRQNLGIYRQQVLGPNKVIMRWLAHRGGALDFREFQLANPGQPFPVAVVLGCDPATILGAVTPVPDSLSEYQFAGLLRGGKTELTQCIGSGLQVPASAEIVLEGVIHPGEMALEGPYGDHTGYYNEQAEFPVFTIDRITMRKNPIYHSTYTGKPPDEPAVLGVALNEVFVPLLQKQYPEIVDFYLPPEGCSYRMAIVSIKKAYPGHAKRIMFGIWSFLRQFMYTKTIIVVDDDIDIRDWKEVIWAMTTRMDATRDTTLVDNTPIDYLDFASPVAGLGSKMGLDATNKWPGETTREWGRPIVMDADVKKRVDTMWQELGI.

Asparagine 172 serves as a coordination point for Mn(2+). Residues 175 to 177, 189 to 191, and 194 to 195 each bind prenylated FMN; these read IYR, RWL, and RG. Residue glutamate 238 participates in Mn(2+) binding. Residue aspartate 287 is the Proton donor of the active site.

It belongs to the UbiD family. As to quaternary structure, homohexamer. Prenylated FMN is required as a cofactor. It depends on Mn(2+) as a cofactor.

The protein resides in the cell membrane. The catalysed reaction is a 4-hydroxy-3-(all-trans-polyprenyl)benzoate + H(+) = a 2-(all-trans-polyprenyl)phenol + CO2. The protein operates within cofactor biosynthesis; ubiquinone biosynthesis. In terms of biological role, catalyzes the decarboxylation of 3-octaprenyl-4-hydroxy benzoate to 2-octaprenylphenol, an intermediate step in ubiquinone biosynthesis. The sequence is that of 3-octaprenyl-4-hydroxybenzoate carboxy-lyase from Dechloromonas aromatica (strain RCB).